Reading from the N-terminus, the 158-residue chain is Superoxide dismutase [Cu-Zn] (158 aa).

Cu cation-binding residues include H46, H48, and H63. C57 and C149 form a disulfide bridge. Residues H63, H71, H80, and D83 each coordinate Zn(2+). Residue H120 coordinates Cu cation.

It belongs to the Cu-Zn superoxide dismutase family. In terms of assembly, homodimer. The cofactor is Cu cation. It depends on Zn(2+) as a cofactor.

It is found in the cytoplasm. The enzyme catalyses 2 superoxide + 2 H(+) = H2O2 + O2. In terms of biological role, destroys radicals which are normally produced within the cells and which are toxic to biological systems. The sequence is that of Superoxide dismutase [Cu-Zn] (SODC) from Brugia pahangi (Filarial nematode worm).